The primary structure comprises 432 residues: Glutamate-1-semialdehyde 2,1-aminomutase (432 aa).

Residue Lys271 is modified to N6-(pyridoxal phosphate)lysine.

Belongs to the class-III pyridoxal-phosphate-dependent aminotransferase family. HemL subfamily. In terms of assembly, homodimer. The cofactor is pyridoxal 5'-phosphate.

Its subcellular location is the cytoplasm. The enzyme catalyses (S)-4-amino-5-oxopentanoate = 5-aminolevulinate. It functions in the pathway porphyrin-containing compound metabolism; protoporphyrin-IX biosynthesis; 5-aminolevulinate from L-glutamyl-tRNA(Glu): step 2/2. This is Glutamate-1-semialdehyde 2,1-aminomutase from Protochlamydia amoebophila (strain UWE25).